The following is a 269-amino-acid chain: Malonyl-[acyl-carrier protein] O-methyltransferase (269 aa).

The protein belongs to the methyltransferase superfamily.

It carries out the reaction malonyl-[ACP] + S-adenosyl-L-methionine = malonyl-[ACP] methyl ester + S-adenosyl-L-homocysteine. It participates in cofactor biosynthesis; biotin biosynthesis. Functionally, converts the free carboxyl group of a malonyl-thioester to its methyl ester by transfer of a methyl group from S-adenosyl-L-methionine (SAM). It allows to synthesize pimeloyl-ACP via the fatty acid synthetic pathway. This Bacillus cereus (strain ATCC 14579 / DSM 31 / CCUG 7414 / JCM 2152 / NBRC 15305 / NCIMB 9373 / NCTC 2599 / NRRL B-3711) protein is Malonyl-[acyl-carrier protein] O-methyltransferase.